We begin with the raw amino-acid sequence, 1368 residues long: DNA-directed RNA polymerase subunit beta (1368 aa).

It belongs to the RNA polymerase beta chain family. In terms of assembly, the RNAP catalytic core consists of 2 alpha, 1 beta, 1 beta' and 1 omega subunit. When a sigma factor is associated with the core the holoenzyme is formed, which can initiate transcription.

It catalyses the reaction RNA(n) + a ribonucleoside 5'-triphosphate = RNA(n+1) + diphosphate. DNA-dependent RNA polymerase catalyzes the transcription of DNA into RNA using the four ribonucleoside triphosphates as substrates. The polypeptide is DNA-directed RNA polymerase subunit beta (Paraburkholderia phymatum (strain DSM 17167 / CIP 108236 / LMG 21445 / STM815) (Burkholderia phymatum)).